The primary structure comprises 512 residues: Acid-sensing ion channel 2 (512 aa).

At 1 to 42 (MDLKESPSEGSLQPSSIQIFANTSTLHGIRHIFVYGPLTIRR) the chain is on the cytoplasmic side. Ser-8 and Ser-11 each carry phosphoserine. The chain crosses the membrane as a helical span at residues 43–64 (VLWAVAFVGSLGLLLVESSERV). Topologically, residues 65–424 (SYYFSYQHVT…ETIEQKKAYE (360 aa)) are extracellular. Disulfide bonds link Cys-92–Cys-193, Cys-289–Cys-364, Cys-307–Cys-360, Cys-311–Cys-358, Cys-320–Cys-342, and Cys-322–Cys-334. 2 N-linked (GlcNAc...) asparagine glycosylation sites follow: Asn-365 and Asn-392. A helical transmembrane segment spans residues 425 to 439 (VAALLGDIGGQMGLF). Topologically, residues 440–512 (IGASILTILE…TLGTLEEIAC (73 aa)) are cytoplasmic. Residues 441-443 (GAS) carry the GAS motif; ion selectivity filter motif.

It belongs to the amiloride-sensitive sodium channel (TC 1.A.6) family. ASIC2 subfamily. Can form homotrimers. Heterotrimer; forms functional heterotrimers producing channel with different properties. Forms heterotrimers with ASIC1; while ASIC1 determines current amplitude, ASIC2 influences the properties of the current. Forms heterotrimers with ASIC3; resulting in channels with distinct properties. Interacts with STOM; STOM regulates the gating of ASIC2-containing channels. Interacts with PICK1; promotes ASIC3 phosphorylation by PKC and activation of ASIC2/ASIC3 heterotrimers. Expressed in brain, cerebellum, trigeminal sensory ganglia and also detected in testis.

Its subcellular location is the cell membrane. The catalysed reaction is Na(+)(in) = Na(+)(out). It catalyses the reaction K(+)(in) = K(+)(out). It carries out the reaction Li(+)(in) = Li(+)(out). Its activity is regulated as follows. Inhibited by the diuretic drug amiloride. Inhibited by gadolinium ions, the heterotrimer with ASIC3 being more sensitive. Heterotrimer composed of ASIC1 and ASIC2 are inhibited by the snake venom mambalgin-1. Functionally, forms pH-gated trimeric sodium channels that act as postsynaptic excitatory sensors in the nervous system. Upon extracellular acidification, these channels generate rapid, transient inward currents that fully desensitize. Highly selective for sodium, they are permeable to other cations. By forming heterotrimeric channels with ASIC1, could contribute to synaptic plasticity, learning, and memory. Additionally, as acid sensors at nerve terminals, plays a role in mechanosensation and phototransduction. The chain is Acid-sensing ion channel 2 from Homo sapiens (Human).